A 939-amino-acid polypeptide reads, in one-letter code: Translation initiation factor IF-2 (939 aa).

The segment at 48-355 (KFAPAPKVEN…KPEKKEKEEE (308 aa)) is disordered. The segment covering 79–93 (QQNQAPKQPQQGTQN) has biased composition (low complexity). A compositionally biased stretch (basic and acidic residues) spans 114 to 130 (SRDKNSRRDNNNRDGQR). Over residues 131–257 (DNNGGYRNND…NNDRNNNGGF (127 aa)) the composition is skewed to low complexity. The segment covering 287–355 (RNNDRRDSAP…KPEKKEKEEE (69 aa)) has biased composition (basic and acidic residues). A tr-type G domain is found at 440 to 609 (PRPPVVCVMG…LLTAEVNELK (170 aa)). Residues 449–456 (GHVDHGKT) form a G1 region. 449–456 (GHVDHGKT) serves as a coordination point for GTP. The tract at residues 474-478 (GITQK) is G2. Residues 495–498 (DTPG) form a G3 region. GTP-binding positions include 495–499 (DTPGH) and 549–552 (NKID). Positions 549-552 (NKID) are G4. Residues 585-587 (SAH) form a G5 region.

This sequence belongs to the TRAFAC class translation factor GTPase superfamily. Classic translation factor GTPase family. IF-2 subfamily.

It localises to the cytoplasm. One of the essential components for the initiation of protein synthesis. Protects formylmethionyl-tRNA from spontaneous hydrolysis and promotes its binding to the 30S ribosomal subunits. Also involved in the hydrolysis of GTP during the formation of the 70S ribosomal complex. The sequence is that of Translation initiation factor IF-2 from Lachnospira eligens (strain ATCC 27750 / DSM 3376 / VPI C15-48 / C15-B4) (Eubacterium eligens).